A 233-amino-acid polypeptide reads, in one-letter code: Cell number regulator 8 (233 aa).

2 helical membrane passes run 85-101 (VCLL…GSNV) and 115-138 (CLPY…APWF).

Belongs to the cornifelin family. In terms of tissue distribution, expressed in roots, coleoptiles, leaves, stalks, apical meristems, immature ears, embryos, endosperm, pericarp, silks, tassel spikelets and pollen. Highest expression in the pericarp and stalks.

The protein localises to the membrane. This is Cell number regulator 8 (CNR8) from Zea mays (Maize).